The sequence spans 202 residues: Holliday junction resolvase RecU (202 aa).

T85, D87, E100, and Q119 together coordinate Mg(2+).

The protein belongs to the RecU family. Mg(2+) serves as cofactor.

It localises to the cytoplasm. It catalyses the reaction Endonucleolytic cleavage at a junction such as a reciprocal single-stranded crossover between two homologous DNA duplexes (Holliday junction).. Endonuclease that resolves Holliday junction intermediates in genetic recombination. Cleaves mobile four-strand junctions by introducing symmetrical nicks in paired strands. Promotes annealing of linear ssDNA with homologous dsDNA. Required for DNA repair, homologous recombination and chromosome segregation. This is Holliday junction resolvase RecU from Streptococcus equi subsp. zooepidemicus (strain H70).